A 209-amino-acid chain; its full sequence is MGKFQVISHPLIQHKLSILRREDTSTKDFRELVNEIAMLMGYEVSRDLPLEEVEIQTPIIKTVQKQLSGKKLAIVPILRAGIGMVDGFLSLVPAAKVGHIGMYRDEETLEPVEYLVKLPEDIDQRQIFVMDPMLATGGSAILAVDSLKKRGAANIKFVCLVAAPEGVKKLQDAHPDIDIYTASLDERLNENGYIVPGLGDAGDRLFGTK.

5-phospho-alpha-D-ribose 1-diphosphate-binding positions include Arg-79, Arg-104, and 131–139; that span reads DPMLATGGS. Uracil-binding positions include Ile-194 and 199–201; that span reads GDA. Asp-200 lines the 5-phospho-alpha-D-ribose 1-diphosphate pocket.

Belongs to the UPRTase family. Mg(2+) serves as cofactor.

The catalysed reaction is UMP + diphosphate = 5-phospho-alpha-D-ribose 1-diphosphate + uracil. It functions in the pathway pyrimidine metabolism; UMP biosynthesis via salvage pathway; UMP from uracil: step 1/1. Its activity is regulated as follows. Allosterically activated by GTP. Catalyzes the conversion of uracil and 5-phospho-alpha-D-ribose 1-diphosphate (PRPP) to UMP and diphosphate. This chain is Uracil phosphoribosyltransferase, found in Streptococcus thermophilus (strain CNRZ 1066).